Here is an 899-residue protein sequence, read N- to C-terminus: Toll-like receptor 4 (899 aa).

An N-terminal signal peptide occupies residues 1-46 (MCPLQIHVLHLIQGNQKNRKGKYVNMTRQLWYILPLLFLLCHCVTS). Residues N25, N75, N83, and N93 are each glycosylated (N-linked (GlcNAc...) asparagine). Topologically, residues 47-702 (ERRCYFSKIS…LERNCRSYTA (656 aa)) are extracellular. 7 LRR repeats span residues 83–103 (NESVVQIDLSNNSINVFPDLP), 104–126 (RSLLVLDISRNPLKQFQKNAFAR), 128–150 (QNLTTLSIVNNTYGLQPSNLTAG), 155–179 (LTRLTYLDLRGSWNGTAYPEEVLSD), 181–202 (VSLNALRINGKQKGFGVLMRKI), 203–229 (HALKRLDISGSEGDCKIDCLHAGYFQN), and 230–253 (VHGIQELNVSNCHLTNILEGTFSY). Residues N129, N137, N146, and N168 are each glycosylated (N-linked (GlcNAc...) asparagine). 4 N-linked (GlcNAc...) asparagine glycosylation sites follow: N237, N256, N275, and N313. LRR repeat units follow at residues 257–282 (LTHLDISYNEELSFNILRNISKDLKN), 313–336 (NTSLRELHANSNRLETIQSGVLMY), 338–360 (PKTLQHASVSDNKLTMGMYALET), and 363–386 (LVNLKTYDMSLQFKSHDPRDIFSN). N-linked (GlcNAc...) asparagine glycosylation is found at N388, N432, and N463. LRR repeat units lie at residues 468–493 (HYPLLKYRIGNNKIKEIYAQDNVFYD), 501–524 (LEGLEILDLSNNFCTNLSTFFFDY), 526–549 (TGLKSVKLNHNILGFSLAKDEKGE), 554–577 (LLKLKHLEIKYNRIQVLPKKILRN), 579–601 (ISLETLDLADNWLRKFKVDLKHI), 602–624 (KGLRHIDLSNNQISELPPGVMRE), and 631–654 (SSNLTVNLTGNSLLCNCENEHFLR). A glycan (N-linked (GlcNAc...) asparagine) is linked at N516. N-linked (GlcNAc...) asparagine glycans are attached at residues N633, N637, and N668. The helical transmembrane segment at 703–723 (VIVLFSCVFVILLTVIVCGVV) threads the bilayer. Residues 724 to 899 (YRYRWKLRYL…WRKLRDPISM (176 aa)) lie on the Cytoplasmic side of the membrane. Residues 756 to 897 (YEFDAFISYA…IFWRKLRDPI (142 aa)) form the TIR domain.

Belongs to the Toll-like receptor family. Expressed in all tissues tested. The highest expression is in the hepatopancreas, with moderate expression in the gills, and low expression in the gonads, adductor muscle, hemocytes, and mantle.

It is found in the cell membrane. Functionally, may be involved in the innate immune response. The chain is Toll-like receptor 4 from Pinctada imbricata (Atlantic pearl-oyster).